A 68-amino-acid chain; its full sequence is Preprofallaxidin-5 (68 aa).

An N-terminal signal peptide occupies residues 1 to 22; sequence MASLKKSLFLVLFLGFVSLSIC. A propeptide spanning residues 23–51 is cleaved from the precursor; that stretch reads EEEKREDKEDEGENEEAEENHEERSEEKR. The interval 24 to 50 is disordered; sequence EEKREDKEDEGENEEAEENHEERSEEK. Residues 30 to 42 show a composition bias toward acidic residues; the sequence is KEDEGENEEAEEN. Leu64 is subject to Leucine amide. A propeptide is located at residue Ser68.

The protein belongs to the frog skin active peptide (FSAP) family. Brevinin subfamily. As to expression, expressed by the skin glands.

It is found in the secreted. This chain is Preprofallaxidin-5, found in Litoria fallax (Eastern dwarf tree frog).